A 420-amino-acid polypeptide reads, in one-letter code: Probable protein phosphatase 2C 73 (420 aa).

One can recognise a PPM-type phosphatase domain in the interval 33–336 (GVSMHTKQGW…DDCAVVCLFL (304 aa)). 2 residues coordinate Mn(2+): aspartate 69 and glycine 70. A compositionally biased stretch (polar residues) spans 96–105 (LKTEQDPSSN). The segment at 96-119 (LKTEQDPSSNTDKETLEKSDCTSL) is disordered. Basic and acidic residues predominate over residues 106 to 115 (TDKETLEKSD). Positions 281 and 327 each coordinate Mn(2+).

The protein belongs to the PP2C family. Mg(2+) serves as cofactor. The cofactor is Mn(2+).

The enzyme catalyses O-phospho-L-seryl-[protein] + H2O = L-seryl-[protein] + phosphate. It carries out the reaction O-phospho-L-threonyl-[protein] + H2O = L-threonyl-[protein] + phosphate. The chain is Probable protein phosphatase 2C 73 from Oryza sativa subsp. japonica (Rice).